Reading from the N-terminus, the 283-residue chain is Pantothenate synthetase (283 aa).

Residue 30 to 37 coordinates ATP; the sequence is MGNLHDAH. Residue histidine 37 is the Proton donor of the active site. Glutamine 61 contributes to the (R)-pantoate binding site. Glutamine 61 is a binding site for beta-alanine. 149–152 contacts ATP; the sequence is GVKD. Glutamine 155 contributes to the (R)-pantoate binding site. ATP contacts are provided by residues valine 178 and 186 to 189; that span reads MSSR.

Belongs to the pantothenate synthetase family. In terms of assembly, homodimer.

The protein localises to the cytoplasm. The enzyme catalyses (R)-pantoate + beta-alanine + ATP = (R)-pantothenate + AMP + diphosphate + H(+). The protein operates within cofactor biosynthesis; (R)-pantothenate biosynthesis; (R)-pantothenate from (R)-pantoate and beta-alanine: step 1/1. Catalyzes the condensation of pantoate with beta-alanine in an ATP-dependent reaction via a pantoyl-adenylate intermediate. The chain is Pantothenate synthetase from Cellvibrio japonicus (strain Ueda107) (Pseudomonas fluorescens subsp. cellulosa).